A 503-amino-acid polypeptide reads, in one-letter code: Na(+)-translocating NADH-quinone reductase subunit B (503 aa).

5 consecutive transmembrane segments (helical) span residues 55 to 75 (MMLVVIALFPATFLAIWNSGV), 94 to 114 (ISGFRSYLSFIFNDIGVFSIL), 120 to 140 (IFLPLLIISYSVGGVCEVLFA), 161 to 181 (TLPPTIPYWMAALGIAFGVVV), and 186 to 206 (FGGTGMNILNPALSGRAFLFF). FMN phosphoryl threonine is present on threonine 248. 5 helical membrane-spanning segments follow: residues 361–381 (TSTFACLLGAIFLVVTGIASW), 387–407 (FGIGAFITAWLFKIFSILIVG), 417–437 (FFIPAYRQLFLGGLGFGLVFM), 452–472 (WIYGLFIGFMTIVIRLINPAY), and 475–495 (GVMLAILLGNVFAPLLDYFAV).

It belongs to the NqrB/RnfD family. As to quaternary structure, composed of six subunits; NqrA, NqrB, NqrC, NqrD, NqrE and NqrF. FMN serves as cofactor.

Its subcellular location is the cell inner membrane. The catalysed reaction is a ubiquinone + n Na(+)(in) + NADH + H(+) = a ubiquinol + n Na(+)(out) + NAD(+). Its function is as follows. NQR complex catalyzes the reduction of ubiquinone-1 to ubiquinol by two successive reactions, coupled with the transport of Na(+) ions from the cytoplasm to the periplasm. NqrA to NqrE are probably involved in the second step, the conversion of ubisemiquinone to ubiquinol. This is Na(+)-translocating NADH-quinone reductase subunit B from Chlamydia caviae (strain ATCC VR-813 / DSM 19441 / 03DC25 / GPIC) (Chlamydophila caviae).